The chain runs to 307 residues: Ribosomal RNA small subunit methyltransferase H (307 aa).

Residues G33–Y35, D51, F82, D96, and Q103 each bind S-adenosyl-L-methionine.

Belongs to the methyltransferase superfamily. RsmH family.

The protein resides in the cytoplasm. The enzyme catalyses cytidine(1402) in 16S rRNA + S-adenosyl-L-methionine = N(4)-methylcytidine(1402) in 16S rRNA + S-adenosyl-L-homocysteine + H(+). In terms of biological role, specifically methylates the N4 position of cytidine in position 1402 (C1402) of 16S rRNA. This is Ribosomal RNA small subunit methyltransferase H from Rickettsia africae (strain ESF-5).